The chain runs to 682 residues: Potassium-transporting ATPase ATP-binding subunit (682 aa).

4 helical membrane passes run 34–54, 62–82, 219–239, and 254–274; these read PVMFIVWIGSVVTTALAVAMA, AGFTGTISVWLWFTVLFANVA, IALTILLVALTIVFLLATATL, and VLVALLVCLIPTTIGGLLSAI. Aspartate 307 (4-aspartylphosphate intermediate) is an active-site residue. ATP-binding positions include aspartate 344, glutamate 348, 377 to 384, and lysine 395; that span reads FTAQTRMS. Mg(2+) is bound by residues aspartate 518 and aspartate 522. Helical transmembrane passes span 588–608, 616–636, and 662–682; these read FAIIPAAFAATYPQLNALNVM, AILSAVIFNALIIVFLIPLAL, and LVVPFIGIKIIDMLLTVFGLV.

It belongs to the cation transport ATPase (P-type) (TC 3.A.3) family. Type IA subfamily. The system is composed of three essential subunits: KdpA, KdpB and KdpC.

It is found in the cell inner membrane. The enzyme catalyses K(+)(out) + ATP + H2O = K(+)(in) + ADP + phosphate + H(+). Functionally, part of the high-affinity ATP-driven potassium transport (or Kdp) system, which catalyzes the hydrolysis of ATP coupled with the electrogenic transport of potassium into the cytoplasm. This subunit is responsible for energy coupling to the transport system and for the release of the potassium ions to the cytoplasm. This Enterobacter sp. (strain 638) protein is Potassium-transporting ATPase ATP-binding subunit.